The chain runs to 202 residues: Transmembrane gamma-carboxyglutamic acid protein 2 (202 aa).

The first 23 residues, Met1–Ser23, serve as a signal peptide directing secretion. A propeptide spanning residues Glu24 to Arg49 is cleaved from the precursor. One can recognise a Gla domain in the interval Ala50–Tyr96. Over Ala50–Ser109 the chain is Extracellular. A disulfide bond links Cys67 and Cys72. The residue at position 70 (Glu70) is a 4-carboxyglutamate. The helical transmembrane segment at Leu110–Trp130 threads the bilayer. At Tyr131 to His202 the chain is on the cytoplasmic side. A disordered region spans residues Cys143–His202. The span at Pro158–Leu175 shows a compositional bias: pro residues. Positions Leu175–Tyr178 match the LPXY motif; mediates binding to WW domain-containing proteins motif. A PPXY motif; mediates binding to WW domain-containing proteins motif is present at residues Pro192–Tyr195.

As to quaternary structure, interacts with NEDD4. Interacts (via cytoplasmic domain) with transcriptional coactivator YAP1. Post-translationally, gamma-carboxyglutamate residues are formed by vitamin K dependent carboxylation. These residues are essential for the binding of calcium. In terms of tissue distribution, widely expressed with highest levels in kidney. Also highly expressed in the thyroid.

It localises to the cell membrane. This chain is Transmembrane gamma-carboxyglutamic acid protein 2, found in Homo sapiens (Human).